A 669-amino-acid polypeptide reads, in one-letter code: Glutaminase kidney isoform, mitochondrial (669 aa).

A mitochondrion-targeting transit peptide spans 1-54 (MMRLRGSGMLRDLLLRSPAGVSATLRRAQPLVTLCRRPRGGGRPAAGPAAAARL). The disordered stretch occupies residues 68–118 (LARGLSSSPSEILQELGKGSTHPQPGVSPPAAPAAPGPKDGPGETDAFGNS). Over residues 93 to 103 (GVSPPAAPAAP) the composition is skewed to pro residues. N6-succinyllysine is present on residues Lys130 and Lys164. Ser286 provides a ligand contact to substrate. Lys311 carries the N6-acetyllysine modification. A highly mobile activation loop region spans residues 315–322 (GLRFNKLF). Residues Asn335, Glu381, Asn388, Tyr414, Tyr466, and Val484 each contribute to the substrate site. 2 ANK repeats span residues 585 to 614 (DSRT…VNPF) and 619 to 648 (WNNT…QYTP). The tract at residues 647 to 669 (TPQGDSDNGKENQTVHKNLDGLL) is disordered. The residue at position 652 (Ser652) is a Phosphoserine. The span at 653 to 669 (DNGKENQTVHKNLDGLL) shows a compositional bias: basic and acidic residues.

This sequence belongs to the glutaminase family. As to quaternary structure, homotetramer, dimer of dimers. The tetramers can assemble into rod-like oligomers (in vitro), but the physiological significance of this is not clear. Interacts with RAF1 and MAP2K2. Interacts with ATCAY; the interaction is direct and may control GLS localization, negatively regulating its activity. Synthesized as a 74-kDa cytosolic precursor which is proteolytically processed by the mitochondrial-processing peptidase (MPP) via a 72-kDa intermediate to yield the mature mitochondrial 68- and 65-kDa subunits. In terms of tissue distribution, isoform 1 and isoform 3 are detected in brain cortex. Isoform 3 is highly expressed in astrocytoma, ganglioglioma and ependymoma. Isoform 1 is highly expressed in brain and kidney, but not detected in liver. Isoform 3 is highly expressed in heart and pancreas, detected at lower levels in placenta, lung, pancreas and kidney, but is not detected in liver. Isoform 2 is expressed in cardiac and skeletal muscle.

The protein localises to the mitochondrion. Its subcellular location is the cytoplasm. The protein resides in the cytosol. It localises to the mitochondrion matrix. The enzyme catalyses L-glutamine + H2O = L-glutamate + NH4(+). With respect to regulation, isoform 1 and isoform 3 are activated by phosphate. Inhibited by BPTES. BPTES binds between subunits and favors dissociation of the tetramer into dimers. Inhibited by 6-diazo-5-oxo-L-norleucine (DON). Enzyme activity is stimulated by phosphorylation. Catalyzes the first reaction in the primary pathway for the renal catabolism of glutamine. Plays a role in maintaining acid-base homeostasis. Regulates the levels of the neurotransmitter glutamate, the main excitatory neurotransmitter in the brain. In terms of biological role, lacks catalytic activity. This is Glutaminase kidney isoform, mitochondrial (GLS) from Homo sapiens (Human).